The sequence spans 151 residues: Probable calcium-binding protein CML31 (151 aa).

EF-hand domains follow at residues Ala14–Glu42, Val44–Glu79, Arg84–Asp119, and Gln120–Ala151. Ca(2+) is bound by residues Asp20, Asp22, Asp24, Arg26, Glu31, Asp57, Asp59, Asp61, and Glu68. The Ca(2+) site is built by Asp133, Asn135, Asp137, and Glu144.

In terms of biological role, potential calcium sensor. In Oryza sativa subsp. japonica (Rice), this protein is Probable calcium-binding protein CML31 (CML31).